The following is a 51-amino-acid chain: Large ribosomal subunit protein bL33 (51 aa).

It belongs to the bacterial ribosomal protein bL33 family.

In Pseudoalteromonas translucida (strain TAC 125), this protein is Large ribosomal subunit protein bL33.